The following is a 440-amino-acid chain: Xaa-Pro dipeptidase (440 aa).

5 residues coordinate Mn(2+): aspartate 244, aspartate 255, histidine 335, glutamate 380, and glutamate 419.

It belongs to the peptidase M24B family. Bacterial-type prolidase subfamily. Mn(2+) serves as cofactor.

The catalysed reaction is Xaa-L-Pro dipeptide + H2O = an L-alpha-amino acid + L-proline. Splits dipeptides with a prolyl residue in the C-terminal position. This Shewanella putrefaciens (strain CN-32 / ATCC BAA-453) protein is Xaa-Pro dipeptidase.